Here is a 458-residue protein sequence, read N- to C-terminus: Elongation factor 1-alpha (458 aa).

Gly2 bears the N,N,N-trimethylglycine; by EFM7 mark. Lys3 carries the N6,N6-dimethyllysine; by EFM7; alternate modification. Lys3 is modified (N6-methyllysine; by EFM7; alternate). Residues Lys5–Thr240 enclose the tr-type G domain. The tract at residues Gly14–Ser21 is G1. Ser18 is modified (phosphoserine). GTP contacts are provided by Ser21 and Thr22. N6-methyllysine; by EFM1 is present on Lys30. The segment at Gly70–Asp74 is G2. At Thr72 the chain carries Phosphothreonine. Lys79 is modified (N6,N6,N6-trimethyllysine; by EFM5). Thr82 carries the phosphothreonine modification. The tract at residues Asp91–Gly94 is G3. Positions 153, 154, and 156 each coordinate GTP. Positions Asn153–Asp156 are G4. Ser163 carries the post-translational modification Phosphoserine. Residues Ser192, Gly193, and Trp194 each coordinate GTP. The interval Ser192–Trp194 is G5. Glycyl lysine isopeptide (Lys-Gly) (interchain with G-Cter in ubiquitin) cross-links involve residues Lys224, Lys242, and Lys253. Residue Thr259 is modified to Phosphothreonine. Lys271 participates in a covalent cross-link: Glycyl lysine isopeptide (Lys-Gly) (interchain with G-Cter in ubiquitin). A Phosphoserine modification is found at Ser289. The residue at position 316 (Lys316) is an N6,N6-dimethyllysine; by EFM4; alternate. Lys316 carries the post-translational modification N6-methyllysine; by EFM4; alternate. Residue Lys390 is modified to N6-methyllysine; by EFM6. Lys393 is covalently cross-linked (Glycyl lysine isopeptide (Lys-Gly) (interchain with G-Cter in ubiquitin)). Ser414 carries the post-translational modification Phosphoserine. Thr430 carries the phosphothreonine modification. Residue Lys437 forms a Glycyl lysine isopeptide (Lys-Gly) (interchain with G-Cter in ubiquitin) linkage. A Lysine methyl ester modification is found at Lys458.

The protein belongs to the TRAFAC class translation factor GTPase superfamily. Classic translation factor GTPase family. EF-Tu/EF-1A subfamily. In terms of assembly, the eukaryotic elongation factor 1 complex (eEF1) is probably a heterohexamer. Two trimeric complexes, each composed of eEF1A (TEF1 or TEF2), eEF1Balpha (EFB1) and eEF1Bgamma (CAM1 or TEF4), are probably dimerized via the eF1Bgamma subunits. Interacts with eEF1Balpha; the interaction is direct. Interacts with GCN2 (via C-terminus); this interaction is direct, occurs in amino acid-repleted cells, may be stabilized in a ribosome-dependent manner, reduces GCN2-mediated eIF-2-alpha phosphorylation and is lost in amino acid-starved cells and by uncharged tRNAs. Interacts with CEX1. Interacts with elongation factor 3 (YEF3 or HEF3). Interacts with NAP1. Interacts with SRV2. Interacts with chaperone ZPR1; the interaction is required for its proper folding. Binds to actin and forms a ternary complex with BNI1 and profilin. Interacts with the proteasome, probably via RPT1. Associates with ribosomes. Post-translationally, S-thiolated in response to oxidative stress, probably inhibiting the protein and causing a reduction in protein synthesis. In terms of processing, glutaminylated at Glu-45. An L-glutamine is linked to Glu-45 via the alpha amino group. This glutaminylation is yeast-specific and not essential for the normal functions of eEF1A. However, eEF1A glutaminylation slightly reduced growth under antibiotic-induced translational stress conditions.

It localises to the cytoplasm. Its subcellular location is the cytoskeleton. The protein operates within protein biosynthesis; polypeptide chain elongation. Inhibited by narciclasine. Functionally, GTP-binding component of the eukaryotic elongation factor 1 complex (eEF1). In its active GTP-bound form, binds to and delivers aminoacyl-tRNA to the A-site of ribosomes during protein biosynthesis. In the presence of a correct codon-anticodon match between the aminoacyl-tRNA and the A-site codon of the ribosome-bound mRNA, the ribosome acts as a GTPase activator and the GTP is hydrolyzed. The inactive GDP-bound form leaves the ribosome and must be recycled by its guanine nucleotide exchange factor (GEF) (eEF1B subcomplex) before binding another molecule of aminoacyl-tRNA. Required for nuclear export of aminoacyl-tRNAs. May also be involved in translational quality control by targeting cotranslationally damaged proteins to the proteasome. Also exhibits actin filament-binding and -bundling activities and is involved in cytoskeleton organization. Plays a role as a negative regulator of GCN2 kinase activity by inhibiting GCN2-mediated eIF-2-alpha phosphorylation in amino acid-repleted cells. The chain is Elongation factor 1-alpha (TEF1) from Saccharomyces cerevisiae (strain ATCC 204508 / S288c) (Baker's yeast).